Here is a 407-residue protein sequence, read N- to C-terminus: Putative glucose/galactose transporter (407 aa).

A run of 12 helical transmembrane segments spans residues 11–31 (GSLTALFFLMGFITVLNDILI), 47–67 (LIQFCFFGAYFIMGGVFGNVI), 70–90 (IGYPFGVVLGFVITASGCALF), 96–116 (FGSYGFFLGALFILASGIVCL), 139–159 (VQAFNSLGTTLGPIFGSLLIF), 180–200 (VQMPYLGLAVFSLLLALVMYL), 225–245 (FVFGALGIFFYVGGEVAIGSF), 263–283 (HYLVYYWGGAMVGRFLGSALM), 300–320 (IILIALAILIGGKIALFALTF), 321–341 (VGFFNSIMFPTIFSLATLNLG), 349–369 (GVISMAIVGGALIPPIQGVVT), and 378–398 (NLLYAYSVPLLCYFYILFFAL).

Belongs to the major facilitator superfamily. FHS transporter (TC 2.A.1.7) family.

Its subcellular location is the cell inner membrane. Functionally, intake of glucose and galactose. The sequence is that of Putative glucose/galactose transporter (gluP) from Helicobacter pylori (strain J99 / ATCC 700824) (Campylobacter pylori J99).